We begin with the raw amino-acid sequence, 227 residues long: Cytochrome c oxidase subunit 2 (227 aa).

Topologically, residues 1–14 are mitochondrial intermembrane; it reads MPYPMQLGFQDATS. A helical membrane pass occupies residues 15 to 45; the sequence is PIMEELTYFHDHTLMIVFLISSLVLYIIILM. The Mitochondrial matrix portion of the chain corresponds to 46 to 59; sequence LTTKLTHTSTMDAQ. A helical transmembrane segment spans residues 60–87; sequence EVETIWTILPAVILVLIALPSLRILYMM. Residues 88–227 lie on the Mitochondrial intermembrane side of the membrane; sequence DEIYNPYLTI…YFEKWSSMMQ (140 aa). His-161, Cys-196, Glu-198, Cys-200, His-204, and Met-207 together coordinate Cu cation. Glu-198 lines the Mg(2+) pocket. Phosphotyrosine is present on Tyr-218.

Belongs to the cytochrome c oxidase subunit 2 family. Component of the cytochrome c oxidase (complex IV, CIV), a multisubunit enzyme composed of 14 subunits. The complex is composed of a catalytic core of 3 subunits MT-CO1, MT-CO2 and MT-CO3, encoded in the mitochondrial DNA, and 11 supernumerary subunits COX4I, COX5A, COX5B, COX6A, COX6B, COX6C, COX7A, COX7B, COX7C, COX8 and NDUFA4, which are encoded in the nuclear genome. The complex exists as a monomer or a dimer and forms supercomplexes (SCs) in the inner mitochondrial membrane with NADH-ubiquinone oxidoreductase (complex I, CI) and ubiquinol-cytochrome c oxidoreductase (cytochrome b-c1 complex, complex III, CIII), resulting in different assemblies (supercomplex SCI(1)III(2)IV(1) and megacomplex MCI(2)III(2)IV(2)). Found in a complex with TMEM177, COA6, COX18, COX20, SCO1 and SCO2. Interacts with TMEM177 in a COX20-dependent manner. Interacts with COX20. Interacts with COX16. The cofactor is Cu cation.

Its subcellular location is the mitochondrion inner membrane. The enzyme catalyses 4 Fe(II)-[cytochrome c] + O2 + 8 H(+)(in) = 4 Fe(III)-[cytochrome c] + 2 H2O + 4 H(+)(out). Its function is as follows. Component of the cytochrome c oxidase, the last enzyme in the mitochondrial electron transport chain which drives oxidative phosphorylation. The respiratory chain contains 3 multisubunit complexes succinate dehydrogenase (complex II, CII), ubiquinol-cytochrome c oxidoreductase (cytochrome b-c1 complex, complex III, CIII) and cytochrome c oxidase (complex IV, CIV), that cooperate to transfer electrons derived from NADH and succinate to molecular oxygen, creating an electrochemical gradient over the inner membrane that drives transmembrane transport and the ATP synthase. Cytochrome c oxidase is the component of the respiratory chain that catalyzes the reduction of oxygen to water. Electrons originating from reduced cytochrome c in the intermembrane space (IMS) are transferred via the dinuclear copper A center (CU(A)) of subunit 2 and heme A of subunit 1 to the active site in subunit 1, a binuclear center (BNC) formed by heme A3 and copper B (CU(B)). The BNC reduces molecular oxygen to 2 water molecules using 4 electrons from cytochrome c in the IMS and 4 protons from the mitochondrial matrix. The polypeptide is Cytochrome c oxidase subunit 2 (MT-CO2) (Osphranter robustus (Wallaroo)).